Reading from the N-terminus, the 645-residue chain is DEAD-box ATP-dependent RNA helicase 46 (645 aa).

Disordered stretches follow at residues 1 to 22 (MAAT…KPWK) and 44 to 137 (YERP…AGNE). The WW domain occupies 15–49 (PNLPKPWKGLVDSRTGYLYFWNPETNVTQYERPAS). Over residues 60-72 (VSSSVQTNQQSSS) the composition is skewed to low complexity. A compositionally biased stretch (basic and acidic residues) spans 77–91 (GKEDDKYGRGSDGPK). The span at 108–136 (SSNDAASGLGNASSGGSSARGPPSSAAGN) shows a compositional bias: low complexity. The short motif at 161-189 (MSFEATGLPNELLREVYSAGFSAPSPIQA) is the Q motif element. A Helicase ATP-binding domain is found at 192 to 366 (WPIAMQNRDI…ADLLVNPAQV (175 aa)). 205–212 (AKTGSGKT) provides a ligand contact to ATP. Residues 314-317 (DEAD) carry the DEAD box motif. Residues 395–539 (RLEQILRSQE…KVPPQVREMA (145 aa)) form the Helicase C-terminal domain. The interval 532–645 (PPQVREMATR…FHEAMMMKNR (114 aa)) is disordered. The segment covering 556-597 (SSGGGGGRGGYGDSGYGGRGESGYGSRGDSGYGGRGDSGGRG) has biased composition (gly residues). Residues 598 to 608 (SWAPSRDSSGS) are compositionally biased toward low complexity. A compositionally biased stretch (basic and acidic residues) spans 612–623 (GRERSRSPERFR). A compositionally biased stretch (low complexity) spans 624–634 (GGPPSTSSPPR).

Belongs to the DEAD box helicase family. DDX5/DBP2 subfamily.

The catalysed reaction is ATP + H2O = ADP + phosphate + H(+). The chain is DEAD-box ATP-dependent RNA helicase 46 (RH46) from Arabidopsis thaliana (Mouse-ear cress).